A 1251-amino-acid chain; its full sequence is Phospholipid-transporting ATPase IC (1251 aa).

Residues 1-52 are disordered; the sequence is MSTERDSETTFDEESQPNDEVVPYSDDETEDELEDQGSTVEPEQNRVNREAE. Over 1–121 the chain is Cytoplasmic; sequence MSTERDSETT…LFEQFKRAAN (121 aa). Acidic residues predominate over residues 25–35; the sequence is SDDETEDELED. Over residues 43 to 52 the composition is skewed to basic and acidic residues; the sequence is EQNRVNREAE. Residues 122 to 142 traverse the membrane as a helical segment; it reads FYFLILLILQAIPQISTLAWY. Residues 143–144 lie on the Exoplasmic loop side of the membrane; the sequence is TT. The chain crosses the membrane as a helical span at residues 145-165; the sequence is LVPLLLVLGITAIKDLVDDVA. Over 166–339 the chain is Cytoplasmic; sequence RHKMDKEINN…RTKIDYLMNY (174 aa). Residues 340 to 360 form a helical membrane-spanning segment; it reads MVYTIFIVLILVSAGLAIGHA. Topologically, residues 361–385 are exoplasmic loop; the sequence is YWEAQVGNYSWYLYDGENATPSYRG. A helical membrane pass occupies residues 386–406; the sequence is FLNFWGYIIVLNTMVPISLYV. Over 407 to 952 the chain is Cytoplasmic; the sequence is SVEVIRLGQS…SYIRMCKFLR (546 aa). The active-site 4-aspartylphosphate intermediate is the Asp-454. The ATP site is built by Asp-454, Lys-455, Thr-456, Glu-555, Phe-596, Lys-619, Arg-652, Thr-732, Gly-733, Asp-734, Arg-867, and Lys-873. Asp-454 provides a ligand contact to Mg(2+). Residue Thr-456 participates in Mg(2+) binding. Asp-893 lines the Mg(2+) pocket. Asn-896 and Asp-897 together coordinate ATP. Position 897 (Asp-897) interacts with Mg(2+). A helical transmembrane segment spans residues 953 to 973; that stretch reads YFFYKNFAFTLVHFWYSFFNG. Residues 974-982 lie on the Exoplasmic loop side of the membrane; it reads YSAQTAYED. A helical membrane pass occupies residues 983–1003; it reads WFITLYNVLYSSLPVLLMGLL. Over 1004 to 1032 the chain is Cytoplasmic; that stretch reads DQDVSDKLSLRFPGLYVVGQRDLLFNYKR. The helical transmembrane segment at 1033-1053 threads the bilayer; sequence FFVSLLHGVLTSMVLFFIPLG. At 1054-1071 the chain is on the exoplasmic loop side; it reads AYLQTVGQDGEAPSDYQS. The helical transmembrane segment at 1072 to 1092 threads the bilayer; that stretch reads FAVTVASALVITVNFQIGLDT. At 1093-1094 the chain is on the cytoplasmic side; sequence SY. A helical membrane pass occupies residues 1095–1115; sequence WTFVNAFSIFGSIALYFGIMF. Over 1116 to 1142 the chain is Exoplasmic loop; it reads DFHSAGIHVLFPSAFQFTGTASNALRQ. The helical transmembrane segment at 1143–1163 threads the bilayer; it reads PYIWLTIILTVAVCLLPVVAI. Residues 1164 to 1251 are Cytoplasmic-facing; sequence RFLSMTIWPS…TAEYRRTVES (88 aa). At Ser-1223 the chain carries Phosphoserine.

Belongs to the cation transport ATPase (P-type) (TC 3.A.3) family. Type IV subfamily. In terms of assembly, component of a P4-ATPase flippase complex which consists of a catalytic alpha subunit ATP8B1 and an accessory beta subunit TMEM30A. The flippase ATP8B1:TMEM30A complex can form an intermediate phosphoenzyme in vitro. Also interacts with beta subunit TMEM30B. Mg(2+) serves as cofactor. Hepatocytes, bile duct, intestinal epithelial cells (cholangiocytes and ileocytes), and pancreatic acinar cells.

The protein resides in the cell membrane. It localises to the apical cell membrane. Its subcellular location is the cell projection. The protein localises to the stereocilium. It is found in the endoplasmic reticulum. The protein resides in the golgi apparatus. The catalysed reaction is ATP + H2O + phospholipidSide 1 = ADP + phosphate + phospholipidSide 2.. The enzyme catalyses a 1,2-diacyl-sn-glycero-3-phosphocholine(out) + ATP + H2O = a 1,2-diacyl-sn-glycero-3-phosphocholine(in) + ADP + phosphate + H(+). It catalyses the reaction a 1,2-diacyl-sn-glycero-3-phospho-L-serine(out) + ATP + H2O = a 1,2-diacyl-sn-glycero-3-phospho-L-serine(in) + ADP + phosphate + H(+). Its function is as follows. Catalytic component of a P4-ATPase flippase complex which catalyzes the hydrolysis of ATP coupled to the transport of phospholipids, in particular phosphatidylcholines (PC), from the outer to the inner leaflet of the plasma membrane. May participate in the establishment of the canalicular membrane integrity by ensuring asymmetric distribution of phospholipids in the canicular membrane. Thus may have a role in the regulation of bile acids transport into the canaliculus, uptake of bile acids from intestinal contents into intestinal mucosa or both and protect hepatocytes from bile salts. Involved in the microvillus formation in polarized epithelial cells; the function seems to be independent from its flippase activity. Participates in correct apical membrane localization of CDC42, CFTR and SLC10A2. Enables CDC42 clustering at the apical membrane during enterocyte polarization through the interaction between CDC42 polybasic region and negatively charged membrane lipids provided by ATP8B1. Together with TMEM30A is involved in uptake of the synthetic drug alkylphospholipid perifosine. Required for the preservation of cochlear hair cells in the inner ear. According PubMed:20852622 is proposed to act as cardiolipin transporter during inflammatory injury; the function is questioned by PubMed:21475228. This Mus musculus (Mouse) protein is Phospholipid-transporting ATPase IC.